We begin with the raw amino-acid sequence, 235 residues long: Small ribosomal subunit protein uS2c (235 aa).

This sequence belongs to the universal ribosomal protein uS2 family.

It localises to the plastid. It is found in the chloroplast. This is Small ribosomal subunit protein uS2c (rps2) from Marchantia polymorpha (Common liverwort).